The primary structure comprises 427 residues: MILSCRSVATARGFLLSTRLIMGCAVSQESAIATVSSSSNTATTSTSSSNTSQKWATSRTSRPVTNVTQVSAIHTTSMDSGSSTVQLPSPRGSLTTAVSTSSSGAQRQMSANSERSLHTRPLSETAVILQSQAVKMSTGAGDSAVYEAVERGSLYSLDYRVYIKGPQGIVSPWHDIPLFANKDKRVYNMIVEIPRWTNAKMEMATKEPFSPIKQDEKKGVARFVHNIFPHKGYIWNYGALPQTWEDPNHVVPDTGAKGDNDPIDVIEVGSKVAGRGAVLQVKVLGTLALIDEGETDWKLVAIDVNDENADKLNDIDDVEKVYPGLLAASVEWFRNYKIPAGKPANEFAFNGEFKNREYAEKVIDETNEYWKTLIKEANPSLNTVSRVPEAVHQGTDEAAATAIGATPEHGANAPLPGDVDKWHFVQG.

A compositionally biased stretch (low complexity) spans 36–52 (SSSSNTATTSTSSSNTS). Disordered stretches follow at residues 36 to 63 (SSSSNTATTSTSSSNTSQKWATSRTSRP) and 77 to 118 (SMDS…RSLH). Polar residues-rich tracts occupy residues 53 to 63 (QKWATSRTSRP) and 77 to 114 (SMDSGSSTVQLPSPRGSLTTAVSTSSSGAQRQMSANSE). Mg(2+)-binding residues include Asp259, Asp264, and Asp296.

It belongs to the PPase family. The cofactor is Mg(2+). As to expression, expressed in coelomocytes, the intestine and in the nervous system including the nerve cords and sensory neurons.

Its subcellular location is the cytoplasm. It carries out the reaction diphosphate + H2O = 2 phosphate + H(+). In terms of biological role, catalyzes the hydrolysis of inorganic pyrophosphate (PPi) forming two phosphate ions. Plays a role in intestinal development and subsequent normal secretory, digestive and absorption functions. Required for larval development. The sequence is that of Inorganic pyrophosphatase 1 from Caenorhabditis elegans.